The sequence spans 105 residues: UPF0235 protein RAF_ORF1191 (105 aa).

The protein belongs to the UPF0235 family.

The chain is UPF0235 protein RAF_ORF1191 from Rickettsia africae (strain ESF-5).